Consider the following 175-residue polypeptide: Alkyl hydroperoxide reductase AhpD (175 aa).

Cysteine 131 (proton donor) is an active-site residue. Cysteine 131 and cysteine 134 are oxidised to a cystine. Cysteine 134 serves as the catalytic Cysteine sulfenic acid (-SOH) intermediate.

The protein belongs to the AhpD family.

The enzyme catalyses N(6)-[(R)-dihydrolipoyl]-L-lysyl-[lipoyl-carrier protein] + a hydroperoxide = N(6)-[(R)-lipoyl]-L-lysyl-[lipoyl-carrier protein] + an alcohol + H2O. In terms of biological role, antioxidant protein with alkyl hydroperoxidase activity. Required for the reduction of the AhpC active site cysteine residues and for the regeneration of the AhpC enzyme activity. The chain is Alkyl hydroperoxide reductase AhpD from Brucella abortus (strain 2308).